A 371-amino-acid chain; its full sequence is 3-dehydroquinate synthase (371 aa).

NAD(+)-binding positions include 70–75 (DAEDGK), 104–108 (GAVTD), 128–129 (TT), Lys-141, and Lys-150. The Zn(2+) site is built by Glu-183, His-246, and His-262.

Belongs to the sugar phosphate cyclases superfamily. Dehydroquinate synthase family. The cofactor is Co(2+). Requires Zn(2+) as cofactor. NAD(+) is required as a cofactor.

It is found in the cytoplasm. The catalysed reaction is 7-phospho-2-dehydro-3-deoxy-D-arabino-heptonate = 3-dehydroquinate + phosphate. It participates in metabolic intermediate biosynthesis; chorismate biosynthesis; chorismate from D-erythrose 4-phosphate and phosphoenolpyruvate: step 2/7. Functionally, catalyzes the conversion of 3-deoxy-D-arabino-heptulosonate 7-phosphate (DAHP) to dehydroquinate (DHQ). The sequence is that of 3-dehydroquinate synthase from Saccharopolyspora erythraea (strain ATCC 11635 / DSM 40517 / JCM 4748 / NBRC 13426 / NCIMB 8594 / NRRL 2338).